Here is a 466-residue protein sequence, read N- to C-terminus: Cysteine--tRNA ligase (466 aa).

Zn(2+) is bound at residue C28. The short motif at P30 to N40 is the 'HIGH' region element. Positions 208, 233, and 237 each coordinate Zn(2+). The 'KMSKS' region signature appears at K265–S269. ATP is bound at residue K268.

It belongs to the class-I aminoacyl-tRNA synthetase family. In terms of assembly, monomer. Zn(2+) is required as a cofactor.

It is found in the cytoplasm. It catalyses the reaction tRNA(Cys) + L-cysteine + ATP = L-cysteinyl-tRNA(Cys) + AMP + diphosphate. This Staphylococcus epidermidis (strain ATCC 35984 / DSM 28319 / BCRC 17069 / CCUG 31568 / BM 3577 / RP62A) protein is Cysteine--tRNA ligase.